The following is a 740-amino-acid chain: DNA ligase (740 aa).

The interval 1–20 (MGPGLTLSGMTEQSSLFPAP) is disordered. NAD(+)-binding positions include 56–60 (DAEYD), 105–106 (SI), and Glu142. Lys144 acts as the N6-AMP-lysine intermediate in catalysis. Arg165, Glu201, Lys322, and Lys346 together coordinate NAD(+). Zn(2+) contacts are provided by Cys471, Cys474, Cys489, and Cys495. The region spanning 654–740 (AATLPLAGMT…RGAPPNAGGG (87 aa)) is the BRCT domain.

This sequence belongs to the NAD-dependent DNA ligase family. LigA subfamily. It depends on Mg(2+) as a cofactor. Mn(2+) is required as a cofactor.

The enzyme catalyses NAD(+) + (deoxyribonucleotide)n-3'-hydroxyl + 5'-phospho-(deoxyribonucleotide)m = (deoxyribonucleotide)n+m + AMP + beta-nicotinamide D-nucleotide.. Its function is as follows. DNA ligase that catalyzes the formation of phosphodiester linkages between 5'-phosphoryl and 3'-hydroxyl groups in double-stranded DNA using NAD as a coenzyme and as the energy source for the reaction. It is essential for DNA replication and repair of damaged DNA. The protein is DNA ligase of Acidovorax ebreus (strain TPSY) (Diaphorobacter sp. (strain TPSY)).